A 192-amino-acid chain; its full sequence is Peptidyl-tRNA hydrolase (192 aa).

TRNA is bound at residue Y18. H23 functions as the Proton acceptor in the catalytic mechanism. Positions 69, 71, and 117 each coordinate tRNA.

This sequence belongs to the PTH family. Monomer.

The protein localises to the cytoplasm. The enzyme catalyses an N-acyl-L-alpha-aminoacyl-tRNA + H2O = an N-acyl-L-amino acid + a tRNA + H(+). Its function is as follows. Hydrolyzes ribosome-free peptidyl-tRNAs (with 1 or more amino acids incorporated), which drop off the ribosome during protein synthesis, or as a result of ribosome stalling. Catalyzes the release of premature peptidyl moieties from peptidyl-tRNA molecules trapped in stalled 50S ribosomal subunits, and thus maintains levels of free tRNAs and 50S ribosomes. In Neisseria meningitidis serogroup B (strain ATCC BAA-335 / MC58), this protein is Peptidyl-tRNA hydrolase.